Consider the following 370-residue polypeptide: Anhydro-N-acetylmuramic acid kinase (370 aa).

Position 13 to 20 (13 to 20) interacts with ATP; that stretch reads GTSMDGVD.

Belongs to the anhydro-N-acetylmuramic acid kinase family.

It catalyses the reaction 1,6-anhydro-N-acetyl-beta-muramate + ATP + H2O = N-acetyl-D-muramate 6-phosphate + ADP + H(+). It participates in amino-sugar metabolism; 1,6-anhydro-N-acetylmuramate degradation. It functions in the pathway cell wall biogenesis; peptidoglycan recycling. Functionally, catalyzes the specific phosphorylation of 1,6-anhydro-N-acetylmuramic acid (anhMurNAc) with the simultaneous cleavage of the 1,6-anhydro ring, generating MurNAc-6-P. Is required for the utilization of anhMurNAc either imported from the medium or derived from its own cell wall murein, and thus plays a role in cell wall recycling. The polypeptide is Anhydro-N-acetylmuramic acid kinase (Vibrio parahaemolyticus serotype O3:K6 (strain RIMD 2210633)).